Reading from the N-terminus, the 714-residue chain is Polyribonucleotide nucleotidyltransferase (714 aa).

Residues D488 and D494 each coordinate Mg(2+). The KH domain maps to 555–614 (PRIEVMNIPVDKIREVIGSGGKVIREIVEKTGAKINIDDDGTVKIASASGKEIEAARKWI). Residues 624 to 692 (GQVYEGTVVK…ERGKVRLSMK (69 aa)) enclose the S1 motif domain.

Belongs to the polyribonucleotide nucleotidyltransferase family. Mg(2+) serves as cofactor.

It is found in the cytoplasm. It carries out the reaction RNA(n+1) + phosphate = RNA(n) + a ribonucleoside 5'-diphosphate. Its function is as follows. Involved in mRNA degradation. Catalyzes the phosphorolysis of single-stranded polyribonucleotides processively in the 3'- to 5'-direction. This chain is Polyribonucleotide nucleotidyltransferase, found in Sinorhizobium medicae (strain WSM419) (Ensifer medicae).